The sequence spans 378 residues: Erythronate-4-phosphate dehydrogenase (378 aa).

Substrate contacts are provided by Ser45 and Thr66. Asp146 and Thr175 together coordinate NAD(+). Arg208 is an active-site residue. Asp232 serves as a coordination point for NAD(+). Glu237 is an active-site residue. His254 acts as the Proton donor in catalysis. Gly257 lines the NAD(+) pocket. Residue Tyr258 coordinates substrate.

Belongs to the D-isomer specific 2-hydroxyacid dehydrogenase family. PdxB subfamily. In terms of assembly, homodimer.

It is found in the cytoplasm. It carries out the reaction 4-phospho-D-erythronate + NAD(+) = (R)-3-hydroxy-2-oxo-4-phosphooxybutanoate + NADH + H(+). Its pathway is cofactor biosynthesis; pyridoxine 5'-phosphate biosynthesis; pyridoxine 5'-phosphate from D-erythrose 4-phosphate: step 2/5. Functionally, catalyzes the oxidation of erythronate-4-phosphate to 3-hydroxy-2-oxo-4-phosphonooxybutanoate. The chain is Erythronate-4-phosphate dehydrogenase from Escherichia coli O127:H6 (strain E2348/69 / EPEC).